The sequence spans 1383 residues: NPC intracellular cholesterol transporter 1 homolog 1 (1383 aa).

An N-terminal signal peptide occupies residues 1–20 (MKQLLIFCLLFGSIFHHGDA). 8 disulfides stabilise this stretch: Cys-22–Cys-76, Cys-28–Cys-39, Cys-65–Cys-111, Cys-77–Cys-115, Cys-99–Cys-246, Cys-102–Cys-167, Cys-182–Cys-187, and Cys-235–Cys-251. Asn-42 carries N-linked (GlcNAc...) asparagine glycosylation. N-linked (GlcNAc...) asparagine glycosylation is present at Asn-231. The next 2 helical transmembrane spans lie at 282 to 302 (IFVMLAFIGSLAVLLCVGFVF) and 353 to 373 (PKSHFFIGCAVLIFCLPGMIY). The N-linked (GlcNAc...) asparagine glycan is linked to Asn-447. Disulfide bonds link Cys-464/Cys-474 and Cys-526/Cys-541. The N-linked (GlcNAc...) asparagine glycan is linked to Asn-558. Helical transmembrane passes span 627–647 (EIVTVVIALAFLIGYVTFSLG), 665–685 (ICLGMLSVIINLLSSFCSWGI), 697–717 (ALVVQFFVVTLLGVCRTFMVV), 746–766 (TMPAMFSSSLGCAFSFFIGGF), 780–800 (GLAVLIDVVLHCTIFLALFVW), and 856–876 (IITGIIFIASFITTVILSSKI). The 174-residue stretch at 627-800 (EIVTVVIALA…CTIFLALFVW (174 aa)) folds into the SSD domain. 4 disulfide bridges follow: Cys-929-Cys-934, Cys-976-Cys-1046, Cys-977-Cys-1005, and Cys-988-Cys-1002. Asn-993 and Asn-1082 each carry an N-linked (GlcNAc...) asparagine glycan. Helical transmembrane passes span 1126–1146 (IMPILTTQLFITVVGVFGIIC), 1157–1177 (ACAVICQVSNYFHIVAFMYIF), 1179–1199 (IPVNALSATNLVMSSGILIEF), 1226–1246 (IGPIILSGPVVTMAGSTMFLS), and 1260–1280 (LFLITIVSSAVHALIILPILL).

The protein belongs to the patched family.

The protein localises to the membrane. It carries out the reaction cholesterol(in) = cholesterol(out). In terms of biological role, involved in the uptake or utilization of cholesterol. Ncr-1 and ncr-2 act redundantly to prevent dauer larva formation under favorable growth conditions, and are required for the normal functioning of ADF, ASI and ASG neurons. The chain is NPC intracellular cholesterol transporter 1 homolog 1 from Caenorhabditis elegans.